A 222-amino-acid chain; its full sequence is Pyrrolidone-carboxylate peptidase (222 aa).

Catalysis depends on residues Glu-80, Cys-146, and His-170.

This sequence belongs to the peptidase C15 family. In terms of assembly, homotetramer.

Its subcellular location is the cytoplasm. The catalysed reaction is Release of an N-terminal pyroglutamyl group from a polypeptide, the second amino acid generally not being Pro.. Removes 5-oxoproline from various penultimate amino acid residues except L-proline. The polypeptide is Pyrrolidone-carboxylate peptidase (Mycobacterium marinum (strain ATCC BAA-535 / M)).